We begin with the raw amino-acid sequence, 451 residues long: UPF0210 protein NMA1908 (451 aa).

Belongs to the UPF0210 family. In terms of assembly, homodimer.

In Neisseria meningitidis serogroup A / serotype 4A (strain DSM 15465 / Z2491), this protein is UPF0210 protein NMA1908.